We begin with the raw amino-acid sequence, 841 residues long: Transcription regulator protein BACH2 (841 aa).

One can recognise a BTB domain in the interval 37–103 (CDVTLIVERK…AYTAKLLLSR (67 aa)). Disordered regions lie at residues 153–173 (HEDCENSAGEEEDEEEETMDS), 204–226 (EALLPEPDVPTDTKESSEKDALT), and 246–329 (SSHS…AACL). Positions 160–172 (AGEEEDEEEETMD) are enriched in acidic residues. 2 stretches are compositionally biased toward basic and acidic residues: residues 214 to 224 (TDTKESSEKDA) and 298 to 313 (PDAKDRAGDVEMDRKQ). Phosphoserine is present on Ser315. Glycyl lysine isopeptide (Lys-Gly) (interchain with G-Cter in SUMO2) cross-links involve residues Lys382 and Lys421. The residue at position 521 (Ser521) is a Phosphoserine; by RPS6KB1. A disordered region spans residues 583-610 (QSYGTNSSDESGSFSEADSESCPVQDRG). A compositionally biased stretch (polar residues) spans 584-598 (SYGTNSSDESGSFSE). In terms of domain architecture, bZIP spans 646–709 (FIHDVRRRSK…GELLDNFSCL (64 aa)). Positions 651 to 667 (RRRSKNRIAAQRCRKRK) are basic motif. The tract at residues 671-678 (IQNLECEI) is leucine-zipper. A disordered region spans residues 777–816 (PGPPWAPSNTSENCTSGRRLEGTDPGTFSERGPPLEPRSQ). The Nuclear export signal signature appears at 821–841 (DFCQEMTDKCTTDEQPRKDYT).

The protein belongs to the bZIP family. CNC subfamily. As to quaternary structure, homodimer; disulfide-linked. Heterodimer of BACH2 and Maf-related transcription factors. In terms of processing, phosphorylation at Ser-521 downstream of the PI-3K pathway promotes nuclear export. The reversible disulfide bond may provide a mechanism to regulate the activity in oxidative stress responses. In terms of tissue distribution, B-cell specific.

It localises to the cytoplasm. Its subcellular location is the nucleus. Its function is as follows. Transcriptional regulator that acts as a repressor or activator. Binds to Maf recognition elements (MARE). Plays an important role in coordinating transcription activation and repression by MAFK. Induces apoptosis in response to oxidative stress through repression of the antiapoptotic factor HMOX1. Positively regulates the nuclear import of actin. Is a key regulator of adaptive immunity, crucial for the maintenance of regulatory T-cell function and B-cell maturation. This is Transcription regulator protein BACH2 (BACH2) from Homo sapiens (Human).